The chain runs to 320 residues: N-acetylneuraminate lyase (320 aa).

2 residues coordinate aceneuramate: Thr-51 and Thr-52. The active-site Proton donor is Tyr-143. Residue Lys-173 is the Schiff-base intermediate with substrate of the active site. Positions 175, 199, 201, 202, and 218 each coordinate aceneuramate.

Belongs to the DapA family. NanA subfamily. In terms of assembly, homotetramer.

The protein resides in the cytoplasm. It catalyses the reaction aceneuramate = aldehydo-N-acetyl-D-mannosamine + pyruvate. It participates in amino-sugar metabolism; N-acetylneuraminate degradation. Catalyzes the cleavage of N-acetylneuraminic acid (sialic acid) to form pyruvate and N-acetylmannosamine via a Schiff base intermediate. It prevents sialic acids from being recycled and returning to the cell surface. Involved in the N-glycolylneuraminic acid (Neu5Gc) degradation pathway. The sequence is that of N-acetylneuraminate lyase from Pongo abelii (Sumatran orangutan).